Here is a 327-residue protein sequence, read N- to C-terminus: Acetaldehyde dehydrogenase 5 (327 aa).

15-18 (SGNI) lines the NAD(+) pocket. The active-site Acyl-thioester intermediate is the Cys133. NAD(+) contacts are provided by residues 164–172 (SAGPGTRAN) and Asn297.

The protein belongs to the acetaldehyde dehydrogenase family.

It catalyses the reaction acetaldehyde + NAD(+) + CoA = acetyl-CoA + NADH + H(+). The chain is Acetaldehyde dehydrogenase 5 from Rhodococcus jostii (strain RHA1).